A 255-amino-acid polypeptide reads, in one-letter code: Imidazole glycerol phosphate synthase subunit HisF (255 aa).

Active-site residues include aspartate 11 and aspartate 130.

Belongs to the HisA/HisF family. As to quaternary structure, heterodimer of HisH and HisF.

It is found in the cytoplasm. It carries out the reaction 5-[(5-phospho-1-deoxy-D-ribulos-1-ylimino)methylamino]-1-(5-phospho-beta-D-ribosyl)imidazole-4-carboxamide + L-glutamine = D-erythro-1-(imidazol-4-yl)glycerol 3-phosphate + 5-amino-1-(5-phospho-beta-D-ribosyl)imidazole-4-carboxamide + L-glutamate + H(+). Its pathway is amino-acid biosynthesis; L-histidine biosynthesis; L-histidine from 5-phospho-alpha-D-ribose 1-diphosphate: step 5/9. Functionally, IGPS catalyzes the conversion of PRFAR and glutamine to IGP, AICAR and glutamate. The HisF subunit catalyzes the cyclization activity that produces IGP and AICAR from PRFAR using the ammonia provided by the HisH subunit. In Campylobacter jejuni subsp. jejuni serotype O:6 (strain 81116 / NCTC 11828), this protein is Imidazole glycerol phosphate synthase subunit HisF.